A 470-amino-acid chain; its full sequence is Calcitonin gene-related peptide type 1 receptor (470 aa).

The first 23 residues, 1–23, serve as a signal peptide directing secretion; that stretch reads MTASCWTICLFLLGSVTEFIVLA. The Extracellular segment spans residues 24 to 147; it reads SPEVNESQQQ…HTTEGRRTAM (124 aa). N-linked (GlcNAc...) asparagine glycosylation is found at N28, N74, N126, and N131. Intrachain disulfides connect C56-C82, C73-C113, and C96-C135. The helical transmembrane segment at 148–172 threads the bilayer; that stretch reads NLFYLALIGHGLSLTSLFISLGIFF. Over 173-183 the chain is Cytoplasmic; the sequence is HFKSLSCQRIT. Residues 184 to 206 form a helical membrane-spanning segment; it reads LHKNLFFSFVLNSIITIIWLTAV. Topologically, residues 207-217 are extracellular; sequence ANNQELVQQNP. The chain crosses the membrane as a helical span at residues 218 to 246; that stretch reads ISCKISQFIHLYIFGCNYFWMLCEGIYLH. At 247 to 260 the chain is on the cytoplasmic side; the sequence is TLIVVAVFAEKQHL. A helical membrane pass occupies residues 261–281; that stretch reads MWYYLLGWGFPLIPATIHAVA. At 282-297 the chain is on the extracellular side; that stretch reads RSYYYNDNCWISSNTS. N295 carries N-linked (GlcNAc...) asparagine glycosylation. Residues 298–322 traverse the membrane as a helical segment; the sequence is LLYIIHGPICAAMLVNLFFLLNIVR. Residues 323-337 lie on the Cytoplasmic side of the membrane; the sequence is VLITKLKVTHQAKSS. Residues 338 to 359 traverse the membrane as a helical segment; the sequence is LYMKAVRATLILVPLLGIQYVL. Residues 360–374 lie on the Extracellular side of the membrane; the sequence is LPYKPSGRVSAEIYD. The helical transmembrane segment at 375 to 395 threads the bilayer; the sequence is YIMHILMHYQGLLVATIFCFF. The Cytoplasmic portion of the chain corresponds to 396 to 470; it reads NGEVQAVLRR…AIIKPENPFA (75 aa).

The protein belongs to the G-protein coupled receptor 2 family.

The protein localises to the cell membrane. Its function is as follows. May function as G protein-coupled receptor for calcitonin-gene-related peptides and adrenomedullin. Specificity may be modulated by accessory proteins. May activate cAMP-dependent pathway. The polypeptide is Calcitonin gene-related peptide type 1 receptor (calcrla) (Danio rerio (Zebrafish)).